A 148-amino-acid chain; its full sequence is Azurin (148 aa).

The first 18 residues, 1 to 18 (MRNQLLFALAFIPTIAAA), serve as a signal peptide directing secretion. The Plastocyanin-like domain occupies 19-148 (ASNCEVNVSA…MMRGTVKLVD (130 aa)). A disulfide bond links C22 and C45. Cu cation-binding residues include H65, C131, H136, and M140.

Its subcellular location is the periplasm. The protein operates within one-carbon metabolism; methylamine degradation. Its function is as follows. Probable electron acceptor for methylamine dehydrogenase. The chain is Azurin (azu) from Methylobacillus flagellatus (strain ATCC 51484 / DSM 6875 / VKM B-1610 / KT).